A 732-amino-acid chain; its full sequence is Segment polarity protein dishevelled homolog DVL-2 (732 aa).

A DIX domain is found at 1–82 (MAETKVIYHL…RVVSWLVSSE (82 aa)). Disordered regions lie at residues 81-181 (SETS…SSST) and 195-237 (EEDD…SSFS). Residues 98 to 111 (DPPPVPPPVPPPPA) are compositionally biased toward pro residues. The segment covering 146–157 (MRRDRVRRRDST) has biased composition (basic and acidic residues). The segment covering 202-213 (RFSSSTEQSSAS) has biased composition (polar residues). Residues 215 to 227 (LLKRHRRRRKQRP) show a composition bias toward basic residues. The PDZ domain maps to 250–335 (TVTLNMEKYN…KPGPIILTVA (86 aa)). The region spanning 424 to 498 (PESGLEVRDR…SEQCYYIFGD (75 aa)) is the DEP domain. Low complexity-rich tracts occupy residues 570 to 589 (MGSA…SNRS), 612 to 629 (KSGS…SIRR), and 637 to 647 (PPSERSTSSRP). The tract at residues 570 to 660 (MGSAGSQHSE…HPPSVHSYAA (91 aa)) is disordered.

The protein belongs to the DSH family. As to quaternary structure, can form homomultimers. Interacts with prickle1. Interacts (via the PDZ domain) with ccdc88c/dal and dact1-B/dpr. Interacts (via the DIX domain) with ARP/Axin-related protein and dact1-A/frodo. Interacts with sdc4, possibly via fz7. Interacts directly (via the DEP domain) with efnb1/ephrin-B1. May interact indirectly with the phosphorylated ephrin receptors ephb1 and ephb2 via SH domain-containing adapters. Post-translationally, phosphorylated. Phosphorylation is controlled by frizzled proteins, correlates with the onset of embryo dorsalizing events and is higher in the dorsal half of early cleavage embryos. Phosphorylated on tyrosine residues in response to association with efnb1/ephrin-B1.

Its subcellular location is the cytoplasm. The protein localises to the cytoplasmic vesicle. The protein resides in the cell projection. It localises to the cilium. It is found in the nucleus. Its subcellular location is the cell membrane. Functionally, involved in at least 2 independent signaling cascades, controlling cell fate via canonical Wnt signaling and cell polarity via a planar cell polarity (PCP) cascade. Acts synergistically with dal/dapple-like to activate Wnt signaling, stabilizing ctnnb1/beta-catenin and leading to dorsal axis formation. Also prevents degradation of ctnnb1/beta-catenin by displacing gsk3 from a complex with ARP/Axin-related protein. Has an additional role in anterior-posterior (A/P) axis formation, specifying different neuroectodermal cell fates along the A/P axis in a dose-dependent manner by activating several early patterning genes. In the PCP pathway, required at the cell membrane for PCP-mediated neural and mesodermal convergent extension during gastrulation and subsequent neural tube closure, acting to activate jnk. Also involved in blastopore closure and archenteron elongation during early, but not late, gastrulation. Associates with ephrin receptors and ligands and acts as part of a downstream PCP pathway to mediate ephrin-mediated cell repulsion via activation of rhoa. Required for efnb1/ephrin-B1-driven movement of non-retinal progenitor cells into the retina during eye field formation. Patterns the hindbrain. Required for ciliogenesis. Controls the docking of basal bodies to the apical plasma membrane; mediates the activation, but not localization of rhoa at the apical surface of ciliated cells during basal body docking. Furthermore, required for the association of basal bodies with membrane-bound vesicles and the vesicle-trafficking protein exoc4/sec8, and this association is in turn required for basal body docking. Once basal bodies are docked, required for the planar polarization of basal bodies that underlies ciliary beating and the directional fluid flow across ciliated epithelia. The chain is Segment polarity protein dishevelled homolog DVL-2 from Xenopus tropicalis (Western clawed frog).